Here is a 333-residue protein sequence, read N- to C-terminus: MNRALAIEFSRVTEAAALAAYTWLGRGDKNAADDAAVKAMRYMLNLIHMDAEIVIGEGEIDEAPMLYVGEKVGSGLGELVSIAVDPIDGTHMTAMGQSNAISVLAAGGKNTFLKAPDMYMEKLVVGSNVKGIIDLNLPLEQNLRRIASKLGKSLSDLTVMVLAKPRHDAVIKQIHNLGAKVLAIPDGDVAGSVLCCLPDAEVDLLYGIGGAPEGVAAAAAIRALGGDMQARLIPRNEVKSDTEENKKIAANEIQRCAALGVKVNEVLKLEDLVRDDNLVFTATGITNGDLLKGISRKGNLASTETILIRGKSRTIRKIQSIHYLDDLYKILNI.

Positions 33, 57, 85, and 88 each coordinate Mn(2+). Substrate contacts are provided by residues 88 to 90 (DGT), tyrosine 119, 164 to 166 (KPR), 186 to 188 (DGD), and glycine 210. Glutamate 213 contacts Mn(2+).

The protein belongs to the FBPase class 2 family. It depends on Mn(2+) as a cofactor.

Its subcellular location is the cytoplasm. The catalysed reaction is beta-D-fructose 1,6-bisphosphate + H2O = beta-D-fructose 6-phosphate + phosphate. Its pathway is carbohydrate biosynthesis; gluconeogenesis. Catalyzes the hydrolysis of fructose 1,6-bisphosphate to fructose 6-phosphate. The polypeptide is Fructose-1,6-bisphosphatase class 2 (glpX) (Haemophilus influenzae (strain ATCC 51907 / DSM 11121 / KW20 / Rd)).